A 425-amino-acid chain; its full sequence is Histone-binding protein RBBP4 (425 aa).

At alanine 2 the chain carries N-acetylalanine. WD repeat units lie at residues 32–125 (YDLV…NHEG), 126–175 (EVNR…RLRG), 176–223 (HQKE…KTIF), 225–270 (GHTA…HSVD), 271–314 (AHTA…HSFE), 315–371 (SHKD…FIHG), and 372–404 (GHTA…VWQM). The segment at 361-406 (DGPPELLFIHGGHTAKISDFSWNPNEPWVICSVSEDNIMQVWQMAE) is interaction with HAT1.

Belongs to the WD repeat RBAP46/RBAP48/MSI1 family. Binds directly to histone H4, probably via helix 1 of the histone fold, a region that is not accessible when histone H4 is in chromatin. Interacts with CHAF1A, HDAC1, HDAC2, HDAC3 and HIRA. May also interact with HAT1.

The protein resides in the nucleus. It is found in the chromosome. The protein localises to the telomere. In terms of biological role, core histone-binding subunit that may target chromatin assembly factors, chromatin remodeling factors and histone deacetylases to their histone substrates in a manner that is regulated by nucleosomal DNA. Component of several complexes which regulate chromatin metabolism. This chain is Histone-binding protein RBBP4 (RBBP4), found in Gallus gallus (Chicken).